Consider the following 68-residue polypeptide: Amphipathic peptide VmCT1 (68 aa).

Positions 1-23 (MKTQFVILIVAVVLLQLISHSEA) are cleaved as a signal peptide. The residue at position 36 (F36) is a Phenylalanine amide. Positions 40 to 68 (GLRNFDDLDDTFEPEMSEADLKYLQDLLR) are excised as a propeptide.

Belongs to the non-disulfide-bridged peptide (NDBP) superfamily. Short antimicrobial peptide (group 4) family. Expressed by the venom gland.

The protein resides in the secreted. The protein localises to the target cell membrane. Its function is as follows. Cationic amphipathic peptide with antibacterial activities against both Gram-positive and Gram-negative bacteria. Also shows antifungal activities. Is mildly hemolytic against human erythrocytes. In addition, when tested in vitro on the parasite Trypanosoma cruzi (responsible of the Chagas disease), is able to reduce the number of the three forms (epimastigote, trypomastigote and amastigote). Also shows antiplasmodial and cytotoxic activity (tested on Plasmodium gallinaceum, and MCF-7 breast cancer cell line). The chain is Amphipathic peptide VmCT1 from Vaejovis mexicanus smithi (Mexican scorpion).